A 115-amino-acid chain; its full sequence is Glycine cleavage system H-like protein (115 aa).

Residues 17–99 (VVRLGLTEKM…EGEGWLAVVR (83 aa)) form the Lipoyl-binding domain. Lys58 carries the post-translational modification N6-lipoyllysine.

The protein belongs to the GcvH family. Requires (R)-lipoate as cofactor.

The chain is Glycine cleavage system H-like protein from Chlamydia pneumoniae (Chlamydophila pneumoniae).